The chain runs to 78 residues: Metallothionein-like protein type 2 (78 aa).

Belongs to the metallothionein superfamily. Type 15 family.

Functionally, metallothioneins have a high content of cysteine residues that bind various heavy metals. The protein is Metallothionein-like protein type 2 of Actinidia deliciosa (Kiwi).